Consider the following 522-residue polypeptide: O-fucosyltransferase 38 (522 aa).

A helical; Signal-anchor for type II membrane protein membrane pass occupies residues 26–46; the sequence is AISLYLIFVFAFTIWVLVFSS. Residues 54–67 show a composition bias toward basic and acidic residues; sequence DHTKHQQQHHRDLI. Positions 54 to 73 are disordered; it reads DHTKHQQQHHRDLIDSESFP. N-linked (GlcNAc...) asparagine glycosylation is present at N147. Residue 284–286 participates in substrate binding; it reads HLR. A glycan (N-linked (GlcNAc...) asparagine) is linked at N325. The disordered stretch occupies residues 475–496; that stretch reads HKDRQGAPRRRKGPTQGIKGRA.

This sequence belongs to the glycosyltransferase GT106 family.

The protein resides in the membrane. It functions in the pathway glycan metabolism. This is O-fucosyltransferase 38 from Arabidopsis thaliana (Mouse-ear cress).